Consider the following 448-residue polypeptide: uncharacterized protein (448 aa).

The span at 187–198 (SKGDRGDADDRG) shows a compositional bias: basic and acidic residues. 3 disordered regions span residues 187 to 221 (SKGDRGDADDRGPASVGSGGAPARGAGQQPELPTR), 243 to 270 (LQVPGGTSAAIPSASSTPSLPNLGGATM), and 291 to 361 (LSGL…LPNG). A compositionally biased stretch (low complexity) spans 243 to 261 (LQVPGGTSAAIPSASSTPS). A compositionally biased stretch (basic and acidic residues) spans 307–334 (FDERGQEVRDPADYEHSNEPDERRADDR).

This sequence to M.tuberculosis Rv0025 and Rv0739.

This is an uncharacterized protein from Mycobacterium tuberculosis (strain ATCC 25618 / H37Rv).